Here is a 571-residue protein sequence, read N- to C-terminus: OTU domain-containing protein 5 (571 aa).

Disordered stretches follow at residues 1–111 (MTIL…GPGG) and 146–175 (PGHS…GAGY). The span at 11-30 (PPDADPANEPPPPGPMPPAP) shows a compositional bias: pro residues. Gly residues predominate over residues 32–47 (RGGGVGVGGGGTGVGG). Residues 63–75 (ASPPPQGPLPGPP) show a composition bias toward pro residues. The residue at position 64 (serine 64) is a Phosphoserine. Residues 84-97 (AVPPGAVAGPRPQQ) show a composition bias toward low complexity. Residue serine 165 is modified to Phosphoserine. A Phosphotyrosine modification is found at tyrosine 175. Serine 177 carries the phosphoserine modification. The residue at position 195 (threonine 195) is a Phosphothreonine. Residues 213-341 (FIIKQMKEDG…NIHYNSVVNP (129 aa)) form the OTU domain. Residues 218 to 224 (MKEDGAC) are cys-loop. Residue aspartate 221 is part of the active site. Cysteine 224 (nucleophile) is an active-site residue. Residues 273-283 (KRKNNCHGNHI) are variable-loop. Residue serine 328 is modified to Phosphoserine; by MTOR. Residues 329 to 334 (YHRNIH) are his-loop. Histidine 334 is a catalytic residue. 2 positions are modified to phosphoserine: serine 337 and serine 375. Residues 418–502 (ARQVRGPSQP…PGTSSQFSAG (85 aa)) form a disordered region. Low complexity-rich tracts occupy residues 430 to 443 (ASAT…AASS) and 450 to 462 (SRSP…ASSP). Serine 452 is modified (phosphoserine). At threonine 507 the chain carries Phosphothreonine. Serine 508 bears the Phosphoserine; by MTOR mark.

The protein belongs to the peptidase C85 family. Interacts with TRAF3. In terms of processing, phosphorylation at Ser-177 is required for deubiquitinating activity. Phosphorylation at Ser-328, Ser-337 and Ser-508 by MTOR promotes its activity. As to expression, expressed in various tissues, including the liver and placenta, as well as in peripheral blood leukocytes.

The protein resides in the nucleus. The enzyme catalyses Thiol-dependent hydrolysis of ester, thioester, amide, peptide and isopeptide bonds formed by the C-terminal Gly of ubiquitin (a 76-residue protein attached to proteins as an intracellular targeting signal).. Its activity is regulated as follows. Inhibited by N-ethyl-maleimide (NEM). Deubiquitinating enzyme that functions as a negative regulator of the innate immune system. Has peptidase activity towards 'Lys-48'- and 'Lys-63'-linked polyubiquitin chains. Can also cleave 'Lys-11'-linked ubiquitin chains (in vitro). Acts via TRAF3 deubiquitination and subsequent suppression of type I interferon (IFN) production. Controls neuroectodermal differentiation through cleaving 'Lys-48'-linked ubiquitin chains to counteract degradation of select chromatin regulators such as ARID1A, HDAC2 and HCF1. Acts as a positive regulator of mTORC1 and mTORC2 signaling following phosphorylation by MTOR: acts by mediating deubiquitination of BTRC, leading to its stability. The protein is OTU domain-containing protein 5 of Homo sapiens (Human).